The following is a 120-amino-acid chain: MMILEGYGSVLAFFVIASLIPVIALSASKLLRPRGGGPERRTTYESGIEPMGEAWIQFNIRYYMFALVFVVFDVETLFLYPWAVTFQRLGLSAFFEVLIFIIVLLIGLVYAWRKGALEWS.

Helical transmembrane passes span 3–23 (ILEG…IPVI), 64–84 (MFAL…PWAV), and 89–109 (LGLS…IGLV).

It belongs to the complex I subunit 3 family. NDH is composed of at least 16 different subunits, 5 of which are encoded in the nucleus.

Its subcellular location is the plastid. The protein localises to the chloroplast thylakoid membrane. It carries out the reaction a plastoquinone + NADH + (n+1) H(+)(in) = a plastoquinol + NAD(+) + n H(+)(out). It catalyses the reaction a plastoquinone + NADPH + (n+1) H(+)(in) = a plastoquinol + NADP(+) + n H(+)(out). NDH shuttles electrons from NAD(P)H:plastoquinone, via FMN and iron-sulfur (Fe-S) centers, to quinones in the photosynthetic chain and possibly in a chloroplast respiratory chain. The immediate electron acceptor for the enzyme in this species is believed to be plastoquinone. Couples the redox reaction to proton translocation, and thus conserves the redox energy in a proton gradient. The chain is NAD(P)H-quinone oxidoreductase subunit 3, chloroplastic from Nephroselmis olivacea (Green alga).